Here is a 277-residue protein sequence, read N- to C-terminus: Large ribosomal subunit protein uL2c (277 aa).

Positions 228–254 are disordered; it reads VDHPHGGGEGRCPVGHAQPRTPWGKPA.

This sequence belongs to the universal ribosomal protein uL2 family. Part of the 50S ribosomal subunit.

Its subcellular location is the plastid. It localises to the chloroplast. The sequence is that of Large ribosomal subunit protein uL2c (rpl2) from Ostreococcus tauri.